The sequence spans 1523 residues: Slit homolog 3 protein (1523 aa).

The signal sequence occupies residues 1-33 (MALGRTGAGAAVRARLALGLALASILSGPPAAA). Positions 34–61 (CPTKCTCSAASVDCHGLGLRAVPRGIPR) constitute an LRRNT domain. 6 LRR repeats span residues 62 to 83 (NAERLDLDRNNITRITKMDFAG), 86 to 107 (NLRVLHLEDNQVSIIERGAFQD), 110 to 131 (QLERLRLNKNKLQVLPELLFQS), 134 to 155 (KLTRLDLSENQIQGIPRKAFRG), 158 to 179 (GVKNLQLDNNHISCIEDGAFRA), and 182 to 203 (DLEILTLNNNNISRILVTSFNH). Residue N72 is glycosylated (N-linked (GlcNAc...) asparagine). N192 carries N-linked (GlcNAc...) asparagine glycosylation. In terms of domain architecture, LRRCT 1 spans 215–265 (NHLYCDCHLAWLSDWLRQRRTIGQFTLCMAPVHLRGFSVADVQKKEYVCPG). The LRRNT 2 domain occupies 271 to 307 (PACNANSLSCPSACSCSNNIVDCRGKGLTEIPANLPE). Residues C284 and C293 are joined by a disulfide bond. LRR repeat units follow at residues 308–329 (GIVEIRLEQNSIKSIPAGAFTQ), 332–353 (KLKRIDISKNQISDIAPDAFQG), 356–377 (SLTSLVLYGNKITEIPKGLFDG), 380–401 (SLQLLLLNANKINCLRVNTFQD), and 404–425 (NLNLLSLYDNKLQTISKGLFVP). One can recognise an LRRCT 2 domain in the interval 437-487 (NPFVCDCHLKWLADYLQDNPIETSGARCSSPRRLANKRISQIKSKKFRCSG). Cystine bridges form between C441–C464, C443–C485, C505–C511, and C509–C518. The region spanning 496 to 532 (SSECFMDLVCPEKCRCEGTIVDCSNQKLARIPSHLPE) is the LRRNT 3 domain. LRR repeat units follow at residues 533–554 (YTTDLRLNDNDISVLEATGIFK), 558–579 (NLRKINLSNNRIKEVREGAFDG), 582–603 (GVQELMLTGNQLETMHGRMFRG), 606–627 (SLKTLMLRSNLISCVSNDTFAG), and 630–651 (SVRLLSLYDNRITTITPGAFTT). A glycan (N-linked (GlcNAc...) asparagine) is linked at N563. N-linked (GlcNAc...) asparagine glycosylation is present at N622. The LRRCT 3 domain occupies 663–713 (NPFNCNCHMAWLGRWLRKRRIVSGNPRCQKPFFLKEIPIQDVAIQDFTCDG). 2 disulfide bridges follow: C667-C690 and C669-C711. The 37-residue stretch at 716–752 (ESSCQLSPRCPEQCTCVETVVRCSNRGLHALPKGMPK) folds into the LRRNT 4 domain. 4 LRR repeats span residues 753-774 (DVTELYLEGNHLTAVPKELSAF), 776-797 (QLTLIDLSNNSISMLTNHTFSN), 800-821 (HLSTLILSYNRLRCIPVHAFNG), and 824-845 (SLRVLTLHGNDISSVPEGSFND). N784, N792, and N797 each carry an N-linked (GlcNAc...) asparagine glycan. Residues 857-907 (NPLHCDCSLRWLSEWVKAGYKEPGIARCSSPESMADRLLLTTPTHRFQCKG) form the LRRCT 4 domain. 6 consecutive EGF-like domains span residues 918–953 (NACLSSPCKNNGTCSQDPVEQYRCTCPYSYKGKDCT), 955–994 (PINTCVQNPCEHGGTCHLSENLRDGFSCSCPLGFEGQRCE), 996–1032 (NPDDCEDNDCENSATCVDGINNYACLCPPNYTGELCD), 1034–1072 (VIDYCVPEMNLCQHEAKCISLDKGFRCECVPGYSGKLCE), 1074–1110 (NNDDCVAHKCRHGAQCVDEVNGYTCICPQGFSGLFCE), and 1119–1155 (QTSPCDQYECQNGAQCIVVQQEPTCRCPPGFAGPRCE). Cystine bridges form between C920–C931, C925–C941, C943–C952, C959–C970, C964–C982, C984–C993, C1000–C1011, C1005–C1020, C1022–C1031, C1038–C1051, C1045–C1060, C1062–C1071, C1078–C1089, C1083–C1098, C1100–C1109, C1123–C1134, C1128–C1143, and C1145–C1154. N928 carries an N-linked (GlcNAc...) asparagine glycan. N-linked (GlcNAc...) asparagine glycosylation is present at N1025. The Laminin G-like domain occupies 1158-1332 (ITVNFVGKDS…PQSLGVSPGC (175 aa)). N-linked (GlcNAc...) asparagine glycosylation is found at N1181 and N1247. Cystine bridges form between C1305-C1332, C1355-C1364, C1372-C1382, C1377-C1391, and C1393-C1402. EGF-like domains are found at residues 1340-1365 (HGLCRSVEKDSVVCECHPGWTGPLCD) and 1368-1403 (ARDPCLGHSCRHGTCMATGDSYVCKCAEGYGGALCD). N-linked (GlcNAc...) asparagine glycosylation is present at N1406. In terms of domain architecture, EGF-like 9 spans 1408 to 1444 (SASACSAFKCHHGQCHISDRGEPYCLCQPGFSGHHCE). Intrachain disulfides connect C1412–C1422, C1417–C1432, C1434–C1443, C1449–C1487, C1467–C1501, C1478–C1517, and C1482–C1519. One can recognise a CTCK domain in the interval 1449-1523 (CMGEIVREAI…HLECGCRACS (75 aa)).

It is found in the secreted. Functionally, may act as molecular guidance cue in cellular migration, and function may be mediated by interaction with roundabout homolog receptors. The polypeptide is Slit homolog 3 protein (Slit3) (Mus musculus (Mouse)).